Here is a 223-residue protein sequence, read N- to C-terminus: FAD-dependent monooxygenase imqC (223 aa).

FAD contacts are provided by residues 139–141 (RFY), Tyr-189, and Asp-210.

It belongs to the PheA/TfdB FAD monooxygenase family.

It functions in the pathway secondary metabolite biosynthesis. Its function is as follows. FAD-dependent monooxygenase; part of the gene cluster that mediates the biosynthesis of imizoquins A to D, tripeptide-derived alkaloids that serve a protective role against oxidative stress that are essential for normal germination. ImqB is a canonical three-module NRPS that assembles the tripeptide backbone of the imizoquins via condensation of Trp, Tyr, and Leu-derived precursors. N-methylation by imqF and phenol oxidation by imqC, followed by cyclization via the FAD-dependent oxidase imqH carry out the three-step transformation of L-tyrosine into tetrahydroisoquinoline. Importantly, this sequence requires the presence of a free amine in the tyrosine moiety, indicating that isoquinoline formation occurs prior to peptide bond formation. The imidazolidin-4-one ring of imizoquins could form following additional oxidation of the methyl-derived bridgehead carbon by imqH. Lastly, O-methylation by imqG and leucine hydroxylation by imqE complete biosynthesis of the imizoquins. The polypeptide is FAD-dependent monooxygenase imqC (Aspergillus flavus (strain ATCC 200026 / FGSC A1120 / IAM 13836 / NRRL 3357 / JCM 12722 / SRRC 167)).